The primary structure comprises 378 residues: Stimulator of interferon genes protein (378 aa).

At 1–17 the chain is on the cytoplasmic side; it reads MPYSNLHPAIPRPRGHR. The segment at 1-189 is mediates interaction with ZDHHC1 and ZDHHC11; sequence MPYSNLHPAI…MFNQLHNNML (189 aa). The chain crosses the membrane as a helical span at residues 18 to 34; it reads SKYVALIFLVASLMILW. K19 participates in a covalent cross-link: Glycyl lysine isopeptide (Lys-Gly) (interchain with G-Cter in ubiquitin). Residues 35–44 are Lumenal-facing; it reads VAKDPPNHTL. Residues 45–69 traverse the membrane as a helical segment; the sequence is KYLALHLASHELGLLLKNLCCLAEE. At 70-91 the chain is on the cytoplasmic side; sequence LCHVQSRYQGSYWKAVRACLGC. S-palmitoyl cysteine attachment occurs at residues C88 and C91. A helical membrane pass occupies residues 92–106; that stretch reads PIHCMAMILLSSYFY. Residues 107–115 are Lumenal-facing; the sequence is FLQNTADIY. A helical membrane pass occupies residues 116 to 133; that stretch reads LSWMFGLLVLYKSLSMLL. Residues 134–378 lie on the Cytoplasmic side of the membrane; that stretch reads GLQSLTPAEV…QPLPLRTDLI (245 aa). A Glycyl lysine isopeptide (Lys-Gly) (interchain with G-Cter in ubiquitin) cross-link involves residue K150. Positions 152 to 339 are cyclic dinucleotide-binding domain (CBD); that stretch reads LNVAHGLAWS…RHIRQEEKEE (188 aa). G165 contributes to the 3',3'-c-di-GMP binding site. Residue Y166 participates in 2',3'-cUAMP binding. A 3',3'-cGAMP-binding site is contributed by Y166. K235 is covalently cross-linked (Glycyl lysine isopeptide (Lys-Gly) (interchain with G-Cter in ubiquitin)). Residue R237 coordinates 2',3'-cUAMP. R237 contacts 3',3'-cGAMP. 2',3'-cGAMP is bound at residue R237. 3',3'-c-di-GMP-binding positions include 237 to 240 and T262; that span reads RVYS. S240 is subject to Phosphoserine. Residue T262 participates in 2',3'-cUAMP binding. Residue T262 participates in 2',3'-cGAMP binding. Residue K337 forms a Glycyl lysine isopeptide (Lys-Gly) (interchain with G-Cter in SUMO) linkage. The segment at 339–378 is C-terminal tail (CTT); it reads EVTMNAPMTSVAPPPSVLSQEPRLLISGMDQPLPLRTDLI. Residue S354 is modified to Phosphoserine; by MAP3K7. 2 positions are modified to phosphoserine; by TBK1: S357 and S365. The pLxIS motif motif lies at 362-365; it reads LLIS.

The protein belongs to the STING family. Homodimer; forms a homodimer in absence of cyclic nucleotide (c-di-GMP or cGAMP); 'Lys-63'-linked ubiquitination at Lys-150 is required for homodimerization. Homotetramer; in presence of cyclic nucleotide (c-di-GMP or cGAMP), forms tetramers and higher-order oligomers through side-by-side packing. Interacts (when phosphorylated) with IRF3; following activation and phosphorylation on the pLxIS motif by TBK1, recruits IRF3. Interacts with RIGI, MAVS and SSR2. Interacts with RNF5 and TRIM56. Interacts with TBK1; when homodimer, leading to subsequent production of IFN-beta. Interacts with IFIT1 and IFIT2. Interacts with TRIM29; this interaction induces STING1 ubiquitination and subsequent degradation. Associates with the MHC-II complex. Interacts with STEEP1; interaction takes place upon cGAMP-activation and STING1 phosphorylation by MAP3K7/TAK1 and promotes STING1 translocation to COPII vesicles. Interacts with SEC24A, SEC24B and SEC24C; promoting translocation to COPII vesicles. Interacts (when ubiquitinated) with SQSTM1; leading to relocalization to autophagosomes. Interacts with SURF4. Interacts with HNRNPA2B1. Interacts with ZDHHC1; ZDHHC1 constitutively interacts with STING1 and in presence of DNA viruses activates it by promoting its cGAMP-induced oligomerization and the recruitment of downstream signaling components. Interacts with ZDHHC11; in presence of DNA viruses promotes the recruitment of IRF3 to STING1. Interacts with TOMM70. Interacts with IFI204. Interacts with TAB1; promoting recruitment of TAB1 to the endoplasmic reticulum membrane and subsequent activation of MAP3K7/TAK1. Interacts (via transmembrane domain) with TMEM203. Interacts with DDX41. Post-translationally, phosphorylation by TBK1 leads to activation and production of IFN-beta. Following cyclic nucleotide (c-di-GMP or cGAMP)-binding, activation and translocation from the endoplasmic reticulum, STING1 is phosphorylated by TBK1 at Ser-365 in the pLxIS motif. The phosphorylated pLxIS motif constitutes an IRF3-binding motif, leading to recruitment of the transcription factor IRF3 to induce type-I interferons and other cytokines. The phosphorylated pLxIS motif facilitates SENP2 recruitment during late phase of viral infection. Phosphorylated on tyrosine residues upon MHC-II aggregation. Dephosphorylation by PPP6C leads to inactivation and decreased production of IFN-beta. Phosphorylation at Ser-357 is also required to activate IRF3. Phosphorylation at Ser-354 by MAP3K7/TAK1 facilitates its interaction with STEEP1, promoting STING1 translocation to COPII vesicles. Ubiquitinated. Ubiquitinated via 'Lys-63'-linked ubiquitin chains in response to double-stranded DNA treatment, leading to relocalization to autophagosomes and subsequent degradation; this process is dependent on SQSTM1. 'Lys-63'-linked ubiquitination mediated by TRIM56 at Lys-150 promotes homodimerization and recruitment of the antiviral kinase TBK1 and subsequent production of IFN-beta. 'Lys-48'-linked polyubiquitination at Lys-150 occurring after viral infection is mediated by RNF5 and leads to proteasomal degradation. 'Lys-11'-linked polyubiquitination at Lys-150 by RNF26 leads to stabilize STING1: it protects STING1 from RNF5-mediated 'Lys-48'-linked polyubiquitination. 'Lys-33'-linked and 'Lys-48'-linked deubiquitinated by USP20; leading to its stabilization and promotion of innate antiviral response. 'Lys-48'-linked deubiquitinated by USP44; leading to its stabilization and promotion of innate antiviral response. Deubiquitinated by USP13; leading to inhibition of innate antiviral response. 'Lys-63'-linked deubiquitinated by USP49; leading to inhibition of the subsequent recruitment of TBK1 to the signaling complex. 'Lys-63'-linked ubiquitination mediated by RNF39 promotes the activation of the cGAS-STING pathway. MARCHF5-mediated ubiquitination prevents the oxidation-induced polymer formation. In terms of processing, sumoylated at Lys-337 by TRIM38 during the early phase of viral infection, promoting its stability by preventing its relocalization to autophagosomes and subsequent degradation. Desumoylated by SENP2 during the late phase of viral infection. Post-translationally, palmitoylation takes place in the Golgi apparatus and creates a platform for the recruitment of TBK1. Present in spleen and thymus tissue. Also present in dendritic cells (at protein level).

The protein resides in the endoplasmic reticulum membrane. It localises to the cytoplasm. It is found in the perinuclear region. Its subcellular location is the endoplasmic reticulum-Golgi intermediate compartment membrane. The protein localises to the golgi apparatus membrane. The protein resides in the cytoplasmic vesicle. It localises to the autophagosome membrane. It is found in the mitochondrion outer membrane. Its subcellular location is the cell membrane. The protein localises to the lysosome membrane. The enzyme catalyses H(+)(in) = H(+)(out). With respect to regulation, activated by anticancer drug 5,6-dimethylxanthenone 4-acetic acid (DMXAA). Specifically inhibited by nitrofuran derivatives C-178 and C-176, which covalently bind Cys-91 and prevent palmitoylation and subsequent activation od STING1. In terms of biological role, facilitator of innate immune signaling that acts as a sensor of cytosolic DNA from bacteria and viruses and promotes the production of type I interferon (IFN-alpha and IFN-beta). Innate immune response is triggered in response to non-CpG double-stranded DNA from viruses and bacteria delivered to the cytoplasm. Acts by binding cyclic dinucleotides: recognizes and binds cyclic di-GMP (c-di-GMP), a second messenger produced by bacteria, cyclic UMP-AMP (2',3'-cUAMP), and cyclic GMP-AMP (cGAMP), a messenger produced by CGAS in response to DNA virus in the cytosol. Upon binding to c-di-GMP, cUAMP or cGAMP, STING1 oligomerizes, translocates from the endoplasmic reticulum and is phosphorylated by TBK1 on the pLxIS motif, leading to recruitment and subsequent activation of the transcription factor IRF3 to induce expression of type I interferon and exert a potent anti-viral state. Exhibits 2',3' phosphodiester linkage-specific ligand recognition: can bind both 2'-3' linked cGAMP (2'-3'-cGAMP) and 3'-3' linked cGAMP but is preferentially activated by 2'-3' linked cGAMP. The preference for 2'-3'-cGAMP, compared to other linkage isomers is probably due to the ligand itself, whichs adopts an organized free-ligand conformation that resembles the STING1-bound conformation and pays low energy costs in changing into the active conformation. In addition to promote the production of type I interferons, plays a direct role in autophagy. Following cGAMP-binding, STING1 buds from the endoplasmic reticulum into COPII vesicles, which then form the endoplasmic reticulum-Golgi intermediate compartment (ERGIC). The ERGIC serves as the membrane source for WIPI2 recruitment and LC3 lipidation, leading to formation of autophagosomes that target cytosolic DNA or DNA viruses for degradation by the lysosome. Promotes autophagy by acting as a proton channel that directs proton efflux from the Golgi to facilitate MAP1LC3B/LC3B lipidation. The autophagy- and interferon-inducing activities can be uncoupled and autophagy induction is independent of TBK1 phosphorylation. Autophagy is also triggered upon infection by bacteria: following c-di-GMP-binding, which is produced by live Gram-positive bacteria, promotes reticulophagy. May be involved in translocon function, the translocon possibly being able to influence the induction of type I interferons. May be involved in transduction of apoptotic signals via its association with the major histocompatibility complex class II (MHC-II). In Mus musculus (Mouse), this protein is Stimulator of interferon genes protein.